Here is a 1729-residue protein sequence, read N- to C-terminus: 1,3-beta-glucan synthase component bgs1 (1729 aa).

The residue at position 23 (serine 23) is a Phosphoserine. The next 6 helical transmembrane spans lie at 378-398 (WTAC…AVVF), 416-436 (SMLL…FIFA), 448-468 (LVVG…YSIT), 503-523 (FVSW…SYFF), 546-566 (YILG…LLYL), and 577-597 (YLWY…CLGI). A phosphoserine mark is found at serine 784 and serine 788. A run of 8 helical transmembrane segments spans residues 1180 to 1200 (MVIM…GAMY), 1237 to 1257 (ILSI…CELG), 1337 to 1357 (MLLF…WITL), 1440 to 1460 (YGEI…FLFI), 1484 to 1504 (VAPL…GIML), 1515 to 1535 (YGVY…VVVF), 1550 to 1572 (LLGF…ICFL), and 1678 to 1698 (ATLY…PFVF).

It belongs to the glycosyltransferase 48 family. In terms of assembly, component of the 1,3-beta-glucan synthase (GS) complex, composed of at least the alternate catalytic subunits bgs1, bgs2, bgs3, and bgs4, and a regulatory subunit chr4.

The protein localises to the cell membrane. The protein resides in the cell septum. The catalysed reaction is [(1-&gt;3)-beta-D-glucosyl](n) + UDP-alpha-D-glucose = [(1-&gt;3)-beta-D-glucosyl](n+1) + UDP + H(+). Alternate catalytic subunit of the 1,3-beta-glucan synthase (GS) complex. Synthesizes 1,3-beta-glucan, a major structural component of the fungal cell wall. Required for the assembly of the division septum and maintenance of cell polarity. The protein is 1,3-beta-glucan synthase component bgs1 (bgs1) of Schizosaccharomyces pombe (strain 972 / ATCC 24843) (Fission yeast).